Reading from the N-terminus, the 318-residue chain is L-lactate dehydrogenase (318 aa).

Residues Val18, Asp39, Lys44, Tyr69, and 83 to 84 contribute to the NAD(+) site; that span reads GA. Residues Gln86 and Arg92 each coordinate substrate. Residues Ser105, 122 to 124, and Ser147 contribute to the NAD(+) site; that span reads VSN. Position 124–127 (124–127) interacts with substrate; it reads NPVD. 152-155 serves as a coordination point for substrate; sequence DTSR. The active-site Proton acceptor is the His179. Tyr225 bears the Phosphotyrosine mark. Thr234 contributes to the substrate binding site.

This sequence belongs to the LDH/MDH superfamily. LDH family. As to quaternary structure, homotetramer.

It localises to the cytoplasm. It catalyses the reaction (S)-lactate + NAD(+) = pyruvate + NADH + H(+). It functions in the pathway fermentation; pyruvate fermentation to lactate; (S)-lactate from pyruvate: step 1/1. In terms of biological role, catalyzes the conversion of lactate to pyruvate. This is L-lactate dehydrogenase from Clostridium botulinum (strain Loch Maree / Type A3).